A 308-amino-acid polypeptide reads, in one-letter code: Pantothenate synthetase (308 aa).

An ATP-binding site is contributed by 39-46; sequence MGALHDGH. Histidine 46 serves as the catalytic Proton donor. Glutamine 71 provides a ligand contact to (R)-pantoate. Glutamine 71 is a beta-alanine binding site. 157–160 contacts ATP; it reads GEKD. Glutamine 163 is a (R)-pantoate binding site. ATP contacts are provided by residues valine 186 and 194-197; that span reads MSSR. Positions 286-308 are disordered; the sequence is IETPAGTAGPDGDRQYAQSPWRN.

Belongs to the pantothenate synthetase family. In terms of assembly, homodimer.

The protein resides in the cytoplasm. The catalysed reaction is (R)-pantoate + beta-alanine + ATP = (R)-pantothenate + AMP + diphosphate + H(+). The protein operates within cofactor biosynthesis; (R)-pantothenate biosynthesis; (R)-pantothenate from (R)-pantoate and beta-alanine: step 1/1. Its function is as follows. Catalyzes the condensation of pantoate with beta-alanine in an ATP-dependent reaction via a pantoyl-adenylate intermediate. The chain is Pantothenate synthetase from Mycolicibacterium paratuberculosis (strain ATCC BAA-968 / K-10) (Mycobacterium paratuberculosis).